A 134-amino-acid chain; its full sequence is Ribonuclease VapC40 (134 aa).

Residues 3-126 (APDTSVLVAG…LRAVETYERL (124 aa)) enclose the PINc domain. Mg(2+) contacts are provided by D5 and D98.

It belongs to the PINc/VapC protein family. The cofactor is Mg(2+).

Its function is as follows. Toxic component of a type II toxin-antitoxin (TA) system. An RNase. Its cognate antitoxin is VapB40. In Mycobacterium tuberculosis (strain CDC 1551 / Oshkosh), this protein is Ribonuclease VapC40.